The chain runs to 182 residues: Dual-action ribosomal maturation protein DarP (182 aa).

The segment at 1–25 is disordered; sequence MEENLADNSEREARPSKTKRKKEMH.

The protein belongs to the DarP family.

The protein resides in the cytoplasm. In terms of biological role, member of a network of 50S ribosomal subunit biogenesis factors which assembles along the 30S-50S interface, preventing incorrect 23S rRNA structures from forming. Promotes peptidyl transferase center (PTC) maturation. This chain is Dual-action ribosomal maturation protein DarP, found in Nitrosospira multiformis (strain ATCC 25196 / NCIMB 11849 / C 71).